We begin with the raw amino-acid sequence, 644 residues long: ATP-dependent zinc metalloprotease FtsH (644 aa).

Residues M1–S13 are Cytoplasmic-facing. The helical transmembrane segment at M14–P34 threads the bilayer. Residues G35 to L117 are Extracellular-facing. Residues M118–I138 traverse the membrane as a helical segment. Residues N139–E644 are Cytoplasmic-facing. G224–T231 contributes to the ATP binding site. Residue H445 participates in Zn(2+) binding. The active site involves E446. Residues H449 and D522 each coordinate Zn(2+).

It in the central section; belongs to the AAA ATPase family. In the C-terminal section; belongs to the peptidase M41 family. As to quaternary structure, homohexamer. It depends on Zn(2+) as a cofactor.

The protein resides in the cell membrane. Acts as a processive, ATP-dependent zinc metallopeptidase for both cytoplasmic and membrane proteins. Plays a role in the quality control of integral membrane proteins. This is ATP-dependent zinc metalloprotease FtsH from Lancefieldella parvula (strain ATCC 33793 / DSM 20469 / CCUG 32760 / JCM 10300 / KCTC 3663 / VPI 0546 / 1246) (Atopobium parvulum).